Consider the following 254-residue polypeptide: uncharacterized protein (254 aa).

The disordered stretch occupies residues 60–161; that stretch reads PKSPTTTSIS…PEIPQAAPGT (102 aa). 2 stretches are compositionally biased toward low complexity: residues 63–77 and 89–146; these read PTTT…STTP and TPIP…TTTS.

This is an uncharacterized protein from Caenorhabditis elegans.